Reading from the N-terminus, the 151-residue chain is F-box protein GID2 (151 aa).

Residues 1–25 show a composition bias toward basic and acidic residues; it reads MKRSTTDSDLAGDAHNETNKKMKST. Positions 1–27 are disordered; the sequence is MKRSTTDSDLAGDAHNETNKKMKSTEE. Residues 29–75 enclose the F-box domain; that stretch reads EIGFSNLDENLVYEVLKHVDAKTLAMSSCVSKIWHKTAQDERLWELI.

In terms of assembly, part of some SCF(GID2) complex, which consist of SKP1B, CUL1 cullin, GID2/SLY1 and some RING box protein. Interacts directly with SKP1A and SKP1B. Interacts directly with DELLA proteins GAI, RGA, RGL1, RGL3 and probably RGL2. May have a higher affinity for phosphorylated DELLA proteins. As to expression, expressed in all tissues tested, including rosette leaves, green siliques, flowers, stems, cauline leaves and seedlings.

Its subcellular location is the nucleus. It participates in protein modification; protein ubiquitination. Essential component of the SCF-type E3 ligase complex, SCF(GID2), a complex that positively regulates the gibberellin signaling pathway. Upon gibberellin treatment, the SCF(GID2) complex mediates the ubiquitination and subsequent degradation of DELLA proteins (GAI, RGA and RGL2), some repressors of the gibberellin pathway, leading to activate the pathway. This Arabidopsis thaliana (Mouse-ear cress) protein is F-box protein GID2 (GID2).